A 186-amino-acid chain; its full sequence is Small ribosomal subunit protein uS4 (186 aa).

An S4 RNA-binding domain is found at 106 to 170 (RRLQTIVYRK…SPLKDEDHPI (65 aa)). The disordered stretch occupies residues 151–186 (EEEEVDYSPYSPLKDEDHPIRCEARGESPEETAAEE). Residues 163–178 (LKDEDHPIRCEARGES) are compositionally biased toward basic and acidic residues.

It belongs to the universal ribosomal protein uS4 family. Part of the 30S ribosomal subunit. Contacts protein S5. The interaction surface between S4 and S5 is involved in control of translational fidelity.

Functionally, one of the primary rRNA binding proteins, it binds directly to 16S rRNA where it nucleates assembly of the body of the 30S subunit. With S5 and S12 plays an important role in translational accuracy. The protein is Small ribosomal subunit protein uS4 of Methanopyrus kandleri (strain AV19 / DSM 6324 / JCM 9639 / NBRC 100938).